Here is a 114-residue protein sequence, read N- to C-terminus: Large ribosomal subunit protein uL22 (114 aa).

Belongs to the universal ribosomal protein uL22 family. As to quaternary structure, part of the 50S ribosomal subunit.

This protein binds specifically to 23S rRNA; its binding is stimulated by other ribosomal proteins, e.g. L4, L17, and L20. It is important during the early stages of 50S assembly. It makes multiple contacts with different domains of the 23S rRNA in the assembled 50S subunit and ribosome. Functionally, the globular domain of the protein is located near the polypeptide exit tunnel on the outside of the subunit, while an extended beta-hairpin is found that lines the wall of the exit tunnel in the center of the 70S ribosome. This is Large ribosomal subunit protein uL22 from Aeromonas hydrophila subsp. hydrophila (strain ATCC 7966 / DSM 30187 / BCRC 13018 / CCUG 14551 / JCM 1027 / KCTC 2358 / NCIMB 9240 / NCTC 8049).